The sequence spans 213 residues: Leucine-rich repeat protein 1 (213 aa).

The signal sequence occupies residues 1 to 21 (MGAGALGVVAMVAAAVVVAMA). LRR repeat units lie at residues 90–113 (DHLQ…LGNL), 115–137 (NLIS…LGKL), 138–161 (TSLV…LAGI), and 163–186 (SLKV…PFEH).

As to quaternary structure, interacts with HIR1.

It localises to the early endosome membrane. The protein localises to the late endosome membrane. It is found in the cell membrane. In terms of biological role, involved in plant defense response. The protein is Leucine-rich repeat protein 1 of Oryza sativa subsp. indica (Rice).